Here is a 295-residue protein sequence, read N- to C-terminus: Protein gurken (295 aa).

An N-terminal signal peptide occupies residues 1-26 (MMQIPFTRIFKVIFVLSTIVAVTDCC). Residues 27–247 (SSRILLLREH…TAQRKVRMAH (221 aa)) lie on the Extracellular side of the membrane. 2 disordered regions span residues 78 to 111 (EASA…SIAA) and 124 to 175 (TDTW…NDKE). Residues 124–139 (TDTWLASESSTPITDS) are compositionally biased toward polar residues. Low complexity-rich tracts occupy residues 140-152 (ETVT…THTG) and 159-171 (SSSS…TPSP). The EGF-like domain maps to 179–224 (QMLPCSEAYNTSFCLNGGHCFQHPMVNNTVFHSCLCVNDYDGERCA). 3 cysteine pairs are disulfide-bonded: Cys-183–Cys-198, Cys-192–Cys-212, and Cys-214–Cys-223. N-linked (GlcNAc...) asparagine glycosylation is found at Asn-188 and Asn-205. An interaction with cni region spans residues 215–245 (VNDYDGERCAYKSWNGDYIYSPPTAQRKVRM). The helical transmembrane segment at 248-268 (IVFSFPVLLMLSSLYVLFAAV) threads the bilayer. Residues 269 to 295 (FMLRNVPDYRRKQQQLHLHKQRFFVRC) are Cytoplasmic-facing.

In terms of assembly, interacts with cni. In terms of tissue distribution, expressed in nurse cells and oocyte up to oogenesis stage 7. Specifically accumulates in dorsal anterior corner of the oocyte during stages 9/10, at later stages expression is seen as an anterior ring. In stage 10 ovaries, it is concentrated between the oocyte nucleus and the adjacent oolemma. During vitellogenesis stage it can be detected at the oocyte surface, especially on the microvilli. It is also found at the microvilli covering the apical surface of the follicular epithelium and within follicle cells.

It localises to the cell membrane. Functionally, critical for defining the anterior-posterior and dorsal-ventral axes of the egg. May signal directly to dorsal follicle cells through the receptor torpedo (top). During oogenesis this signaling pathway instructs follicle cells to follow a dorsal pathway of development rather than the default ventral pathway. The protein is Protein gurken (grk) of Drosophila melanogaster (Fruit fly).